The chain runs to 174 residues: MGRTLENKQQIVEELKQLLGEAEMALVLDYKGLSIKEMSDLRGRLAANGICKVTKNTLMRRAIDGNDTWSDLDPLLTGTNAFVLVKGDVGGAVKAVQSFQKDSKKSELKGGLFEGRLLSQNDIKAIGDLPSKEGLMAQIAGSINAVATKLAVGVNEVPSGLARALQQHADSENS.

This sequence belongs to the universal ribosomal protein uL10 family. As to quaternary structure, part of the ribosomal stalk of the 50S ribosomal subunit. The N-terminus interacts with L11 and the large rRNA to form the base of the stalk. The C-terminus forms an elongated spine to which L12 dimers bind in a sequential fashion forming a multimeric L10(L12)X complex.

Functionally, forms part of the ribosomal stalk, playing a central role in the interaction of the ribosome with GTP-bound translation factors. The polypeptide is Large ribosomal subunit protein uL10 (Synechococcus sp. (strain RCC307)).